The sequence spans 242 residues: Uridylate kinase (242 aa).

ATP is bound at residue 15 to 18 (KLSG). The tract at residues 23 to 28 (GAEGFG) is involved in allosteric activation by GTP. Residue glycine 57 coordinates UMP. Residues glycine 58 and arginine 62 each coordinate ATP. Residues aspartate 77 and 138–145 (TGNPFFTT) contribute to the UMP site. Positions 165, 171, and 174 each coordinate ATP.

This sequence belongs to the UMP kinase family. Homohexamer.

It localises to the cytoplasm. The enzyme catalyses UMP + ATP = UDP + ADP. Its pathway is pyrimidine metabolism; CTP biosynthesis via de novo pathway; UDP from UMP (UMPK route): step 1/1. Its activity is regulated as follows. Allosterically activated by GTP. Inhibited by UTP. Its function is as follows. Catalyzes the reversible phosphorylation of UMP to UDP. In Photorhabdus laumondii subsp. laumondii (strain DSM 15139 / CIP 105565 / TT01) (Photorhabdus luminescens subsp. laumondii), this protein is Uridylate kinase.